The following is a 750-amino-acid chain: Neprilysin (750 aa).

Residue Gly-2 is the site of N-myristoyl glycine attachment. Topologically, residues 2–28 (GRSESQMDITDINAPKPKKKQRWTPLE) are cytoplasmic. A phosphoserine mark is found at Ser-4 and Ser-6. Positions 16 to 23 (PKPKKKQR) match the Stop-transfer sequence motif. A helical; Signal-anchor for type II membrane protein membrane pass occupies residues 29-51 (ISLSVLVLLLTIIAVTMIALYAT). Residues 52–750 (YDDGICKSSD…MNPERKCRVW (699 aa)) are Extracellular-facing. In terms of domain architecture, Peptidase M13 spans 56–750 (ICKSSDCIKS…MNPERKCRVW (695 aa)). Disulfide bonds link Cys-57–Cys-62, Cys-80–Cys-735, Cys-88–Cys-695, Cys-143–Cys-411, Cys-234–Cys-242, and Cys-621–Cys-747. Arg-103 contributes to the a peptide binding site. Residues Asn-145 and Asn-211 are each glycosylated (N-linked (GlcNAc...) asparagine). 3 N-linked (GlcNAc...) asparagine glycosylation sites follow: Asn-285, Asn-311, and Asn-325. His-584 is a binding site for Zn(2+). Glu-585 is an active-site residue. A Zn(2+)-binding site is contributed by His-588. Asn-628 carries an N-linked (GlcNAc...) asparagine glycan. Glu-647 provides a ligand contact to Zn(2+). The active-site Proton donor is Asp-651.

This sequence belongs to the peptidase M13 family. The cofactor is Zn(2+). In terms of processing, myristoylation is a determinant of membrane targeting. Post-translationally, glycosylation at Asn-628 is necessary both for surface expression and neutral endopeptidase activity.

It localises to the cell membrane. It carries out the reaction Preferential cleavage of polypeptides between hydrophobic residues, particularly with Phe or Tyr at P1'.. It catalyses the reaction substance P + H2O = substance P(1-9) + L-Leu-L-Met-NH2. The enzyme catalyses substance P + H2O = substance P(1-7) + L-Phe-Gly-L-Leu-L-Met-NH2. The catalysed reaction is neurotensin + H2O = neurotensin(1-11) + L-isoleucyl-L-leucine. It carries out the reaction neurotensin + H2O = neurotensin(1-10) + L-tyrosyl-L-isoleucyl-L-leucine. In terms of biological role, thermolysin-like specificity, but is almost confined on acting on polypeptides of up to 30 amino acids. Biologically important in the destruction of opioid peptides such as Met- and Leu-enkephalins by cleavage of a Gly-Phe bond. Catalyzes cleavage of bradykinin, substance P and neurotensin peptides. Able to cleave angiotensin-1, angiotensin-2 and angiotensin 1-9. Involved in the degradation of the atrial natriuretic factor (ANF). Displays UV-inducible elastase activity toward skin preelastic and elastic fibers. This Mus musculus (Mouse) protein is Neprilysin.